Reading from the N-terminus, the 140-residue chain is Transcription antitermination protein NusB (140 aa).

It belongs to the NusB family.

In terms of biological role, involved in transcription antitermination. Required for transcription of ribosomal RNA (rRNA) genes. Binds specifically to the boxA antiterminator sequence of the ribosomal RNA (rrn) operons. In Alteromonas mediterranea (strain DSM 17117 / CIP 110805 / LMG 28347 / Deep ecotype), this protein is Transcription antitermination protein NusB.